Reading from the N-terminus, the 78-residue chain is Acyl carrier protein (78 aa).

In terms of domain architecture, Carrier spans 2–77 (STIEERVKKI…AAIDYVNSHK (76 aa)). Residue S37 is modified to O-(pantetheine 4'-phosphoryl)serine.

The protein belongs to the acyl carrier protein (ACP) family. Post-translationally, 4'-phosphopantetheine is transferred from CoA to a specific serine of apo-ACP by AcpS. This modification is essential for activity because fatty acids are bound in thioester linkage to the sulfhydryl of the prosthetic group.

It is found in the cytoplasm. Its pathway is lipid metabolism; fatty acid biosynthesis. Its function is as follows. Carrier of the growing fatty acid chain in fatty acid biosynthesis. This is Acyl carrier protein from Pseudomonas putida (strain GB-1).